A 327-amino-acid chain; its full sequence is Urease accessory protein 4 (327 aa).

N120 carries N-linked (GlcNAc...) asparagine glycosylation. The helical transmembrane segment at 239–259 (VYATVLIIGPHLTTLFSYLAY) threads the bilayer.

The protein belongs to the UreD family. In terms of assembly, URE4, URE6 and URE7 may form a complex that acts as a GTP-hydrolysis-dependent molecular chaperone, activating the urease apoprotein URE1.

Its subcellular location is the membrane. Functionally, urease accessory protein required for the maturation and activation of urease via the functional incorporation of the urease nickel metallocenter. Plays a role in host brain invasion. In Cryptococcus neoformans var. grubii serotype A (strain H99 / ATCC 208821 / CBS 10515 / FGSC 9487) (Filobasidiella neoformans var. grubii), this protein is Urease accessory protein 4.